The chain runs to 99 residues: MISEARLLQVILAPHISEKGTLSAENHNTMVFKVAGTATKAEIKAAVQKLFEVEVTGVRTLNVKGKTKRTGQRVGRRSDWKKAYVSLVEGADIDFAGAE.

It belongs to the universal ribosomal protein uL23 family. Part of the 50S ribosomal subunit. Contacts protein L29, and trigger factor when it is bound to the ribosome.

Its function is as follows. One of the early assembly proteins it binds 23S rRNA. One of the proteins that surrounds the polypeptide exit tunnel on the outside of the ribosome. Forms the main docking site for trigger factor binding to the ribosome. This chain is Large ribosomal subunit protein uL23, found in Psychromonas ingrahamii (strain DSM 17664 / CCUG 51855 / 37).